The primary structure comprises 158 residues: C-type lectin BML-2 (158 aa).

An N-terminal signal peptide occupies residues 1 to 23 (MGHFTFTGLCLLAMFLSLRGAEC). Disulfide bonds link cysteine 26–cysteine 37, cysteine 54–cysteine 154, cysteine 61–cysteine 156, and cysteine 129–cysteine 146. Positions 33 to 155 (KNGLCYKVFS…CESLHPFLCQ (123 aa)) constitute a C-type lectin domain. The Mannose-binding signature appears at 119–121 (EPN). The N-linked (GlcNAc...) asparagine glycan is linked to asparagine 121. Residues glutamate 127, asparagine 142, and aspartate 143 each coordinate Ca(2+).

Belongs to the true venom lectin family. As to quaternary structure, dimer. Probably non-covalently linked. As to expression, expressed by the venom gland.

It localises to the secreted. In terms of biological role, recombinant C-type lectin BML-2 is able to agglutinate erythrocytes. May be a calcium-dependent lectin. This is C-type lectin BML-2 from Bungarus multicinctus (Many-banded krait).